The primary structure comprises 231 residues: 2,3-bisphosphoglycerate-dependent phosphoglycerate mutase (231 aa).

Substrate-binding positions include 10–17 (RHGQSEWN), 23–24 (TG), Arg62, 89–92 (ERHY), Lys100, 116–117 (RR), and 185–186 (GN). His11 serves as the catalytic Tele-phosphohistidine intermediate. The Proton donor/acceptor role is filled by Glu89.

This sequence belongs to the phosphoglycerate mutase family. BPG-dependent PGAM subfamily. Homodimer.

The catalysed reaction is (2R)-2-phosphoglycerate = (2R)-3-phosphoglycerate. The protein operates within carbohydrate degradation; glycolysis; pyruvate from D-glyceraldehyde 3-phosphate: step 3/5. Catalyzes the interconversion of 2-phosphoglycerate and 3-phosphoglycerate. This Buchnera aphidicola subsp. Acyrthosiphon pisum (strain APS) (Acyrthosiphon pisum symbiotic bacterium) protein is 2,3-bisphosphoglycerate-dependent phosphoglycerate mutase.